An 89-amino-acid chain; its full sequence is Small ribosomal subunit protein uS15 (89 aa).

The protein belongs to the universal ribosomal protein uS15 family. Part of the 30S ribosomal subunit. Forms a bridge to the 50S subunit in the 70S ribosome, contacting the 23S rRNA.

Functionally, one of the primary rRNA binding proteins, it binds directly to 16S rRNA where it helps nucleate assembly of the platform of the 30S subunit by binding and bridging several RNA helices of the 16S rRNA. Its function is as follows. Forms an intersubunit bridge (bridge B4) with the 23S rRNA of the 50S subunit in the ribosome. The polypeptide is Small ribosomal subunit protein uS15 (Streptococcus pyogenes serotype M1).